Reading from the N-terminus, the 1214-residue chain is Myosin-1 (1214 aa).

The interval 1 to 21 is disordered; it reads MAIIKRGARNKTAQEPAKRSA. Residues 36 to 715 enclose the Myosin motor domain; that stretch reads VGVSDLTLLS…TLFALEHMRD (680 aa). An ATP-binding site is contributed by 129-136; the sequence is GESGAGKT. Phosphoserine is present on serine 357. Residues 404-486 form an actin-binding region; sequence SIGILDIYGF…PGIFAAMNDS (83 aa). IQ domains are found at residues 719–739 and 740–765; these read YNMAARIQRAWRRFLQRRIDS and ATRIQRAIREKKGGNKYEKLRDEGSK. The region spanning 771 to 961 is the TH1 domain; the sequence is KERRTMSLLG…TILVRRGHPA (191 aa). Disordered stretches follow at residues 926 to 1090, 1129 to 1177, and 1193 to 1214; these read KPGK…SELP, HQGG…AAAQ, and NKMRVESDGEDNGNDDDDDDDW. The segment covering 965–980 has biased composition (basic residues); that stretch reads QKKKPKKGKGHSKHHS. Composition is skewed to low complexity over residues 981-1000 and 1037-1057; these read TSTSAPRSSVQSSQPSAPVS and AAQPQATPQPAQVTQPQQKKV. Residues 1058-1067 show a composition bias toward pro residues; the sequence is APPPPPPPPM. The SH3 domain maps to 1069–1131; that stretch reads SSEPKYEAAY…PTNYVVKHQG (63 aa). A compositionally biased stretch (low complexity) spans 1157–1177; it reads VSSSQSETATTATPASVAAAQ. Residues 1200-1214 show a composition bias toward acidic residues; that stretch reads DGEDNGNDDDDDDDW.

The protein belongs to the TRAFAC class myosin-kinesin ATPase superfamily. Myosin family. In terms of processing, phosphorylation of the TEDS site (Ser-357) is required for the polarization of the actin cytoskeleton. Phosphorylation probably activates the myosin-I ATPase activity.

Its subcellular location is the cytoplasm. The protein resides in the cytoskeleton. The protein localises to the actin patch. In terms of biological role, type-I myosin implicated in the organization of the actin cytoskeleton. Required for proper actin cytoskeleton polarization. At the cell cortex, assembles in patch-like structures together with proteins from the actin-polymerizing machinery and promotes actin assembly. Functions as actin nucleation-promoting factor (NPF) for the Arp2/3 complex. The polypeptide is Myosin-1 (MYO1) (Vanderwaltozyma polyspora (strain ATCC 22028 / DSM 70294 / BCRC 21397 / CBS 2163 / NBRC 10782 / NRRL Y-8283 / UCD 57-17) (Kluyveromyces polysporus)).